The following is a 257-amino-acid chain: Thiazole synthase (257 aa).

Lysine 96 functions as the Schiff-base intermediate with DXP in the catalytic mechanism. 1-deoxy-D-xylulose 5-phosphate-binding positions include glycine 157, 184–185 (AG), and 206–207 (NT).

Belongs to the ThiG family. As to quaternary structure, homotetramer. Forms heterodimers with either ThiH or ThiS.

It is found in the cytoplasm. It carries out the reaction [ThiS sulfur-carrier protein]-C-terminal-Gly-aminoethanethioate + 2-iminoacetate + 1-deoxy-D-xylulose 5-phosphate = [ThiS sulfur-carrier protein]-C-terminal Gly-Gly + 2-[(2R,5Z)-2-carboxy-4-methylthiazol-5(2H)-ylidene]ethyl phosphate + 2 H2O + H(+). It functions in the pathway cofactor biosynthesis; thiamine diphosphate biosynthesis. In terms of biological role, catalyzes the rearrangement of 1-deoxy-D-xylulose 5-phosphate (DXP) to produce the thiazole phosphate moiety of thiamine. Sulfur is provided by the thiocarboxylate moiety of the carrier protein ThiS. In vitro, sulfur can be provided by H(2)S. The chain is Thiazole synthase from Allorhizobium ampelinum (strain ATCC BAA-846 / DSM 112012 / S4) (Agrobacterium vitis (strain S4)).